We begin with the raw amino-acid sequence, 212 residues long: Large ribosomal subunit protein uL3 (212 aa).

Gln-153 carries the post-translational modification N5-methylglutamine.

It belongs to the universal ribosomal protein uL3 family. In terms of assembly, part of the 50S ribosomal subunit. Forms a cluster with proteins L14 and L19. In terms of processing, methylated by PrmB.

One of the primary rRNA binding proteins, it binds directly near the 3'-end of the 23S rRNA, where it nucleates assembly of the 50S subunit. The sequence is that of Large ribosomal subunit protein uL3 from Shewanella pealeana (strain ATCC 700345 / ANG-SQ1).